Consider the following 171-residue polypeptide: Shikimate kinase (171 aa).

Gly-14 to Thr-19 serves as a coordination point for ATP. Ser-18 lines the Mg(2+) pocket. Substrate contacts are provided by Asp-36, Arg-60, and Gly-82. Arg-120 is an ATP binding site. Position 139 (Arg-139) interacts with substrate. Gln-156 is a binding site for ATP.

This sequence belongs to the shikimate kinase family. As to quaternary structure, monomer. It depends on Mg(2+) as a cofactor.

It localises to the cytoplasm. It catalyses the reaction shikimate + ATP = 3-phosphoshikimate + ADP + H(+). Its pathway is metabolic intermediate biosynthesis; chorismate biosynthesis; chorismate from D-erythrose 4-phosphate and phosphoenolpyruvate: step 5/7. Its function is as follows. Catalyzes the specific phosphorylation of the 3-hydroxyl group of shikimic acid using ATP as a cosubstrate. The polypeptide is Shikimate kinase (Shewanella woodyi (strain ATCC 51908 / MS32)).